Consider the following 169-residue polypeptide: Disulfide bond formation protein B (169 aa).

Residues 1–8 (MRLSVRWV) lie on the Cytoplasmic side of the membrane. A helical transmembrane segment spans residues 9 to 25 (FFLGFFLCALMLAIAGY). Residues 26 to 43 (FQFVENLEPCPLCILSRV) lie on the Periplasmic side of the membrane. Cysteines 35 and 38 form a disulfide. The chain crosses the membrane as a helical span at residues 44–60 (AVLAIGGVFLVAALHNP). At 61 to 67 (KSWGIKV) the chain is on the cytoplasmic side. Residues 68 to 84 (YALLGFVVTLIGIGITG) form a helical membrane-spanning segment. The Periplasmic segment spans residues 85 to 141 (RHVWLQSLPADQVPACGPGLNFMLDNFPLTETLELVFRGSGECAEVQWSFLGLTIPG). Cysteine 100 and cysteine 127 form a disulfide bridge. The helical transmembrane segment at 142 to 160 (WTLVAFLFLGVISLWQMGR) threads the bilayer. Topologically, residues 161–169 (TGGGAGKLT) are cytoplasmic.

It belongs to the DsbB family.

It is found in the cell inner membrane. In terms of biological role, required for disulfide bond formation in some periplasmic proteins. Acts by oxidizing the DsbA protein. This Nitrosococcus oceani (strain ATCC 19707 / BCRC 17464 / JCM 30415 / NCIMB 11848 / C-107) protein is Disulfide bond formation protein B.